The primary structure comprises 221 residues: GTP cyclohydrolase III (221 aa).

This sequence belongs to the archaeal-type GTP cyclohydrolase family.

The catalysed reaction is GTP + 3 H2O = 2-amino-5-formylamino-6-(5-phospho-D-ribosylamino)pyrimidin-4(3H)-one + 2 phosphate + 2 H(+). Its function is as follows. Catalyzes the formation of 2-amino-5-formylamino-6-ribofuranosylamino-4(3H)-pyrimidinone ribonucleotide monophosphate and inorganic phosphate from GTP. Also has an independent pyrophosphate phosphohydrolase activity. The protein is GTP cyclohydrolase III of Pyrobaculum islandicum (strain DSM 4184 / JCM 9189 / GEO3).